The sequence spans 264 residues: MAVGKNKRLTKGGKKGAKKKVVDPFSKKDWYDVKAPAMFNIRNIGKTLVTRTQGTKIASDGLKGRVFEVSLADLQNDEVAFRKFKLITEDVQGKNCLTNFHGMDLTRDKMCSMVKKWQTMIEAHVDVKTTDGYLLRLFCVGFTKKRNNQIRKTSYAQHQQVRQIRKKMMEIMTREVQTNDLKEVVNKLIPDSIGKDIEKACQSIYPLHDVFVRKVKMLKKPKFELGKLMELHGEGSSSGKATGDETGAKVERADGYEPPVQESV.

K34 is modified (N6-acetyllysine; alternate). K34 is covalently cross-linked (Glycyl lysine isopeptide (Lys-Gly) (interchain with G-Cter in SUMO2); alternate). Position 56 is an N6-acetyllysine (K56). Residue Y155 is modified to ADP-ribosyltyrosine. The interval 232–264 (HGEGSSSGKATGDETGAKVERADGYEPPVQESV) is disordered. A phosphoserine mark is found at S236 and S237. The segment covering 242–255 (TGDETGAKVERADG) has biased composition (basic and acidic residues). N6-acetyllysine; alternate is present on K249. K249 is covalently cross-linked (Glycyl lysine isopeptide (Lys-Gly) (interchain with G-Cter in SUMO2); alternate). Y256 carries the post-translational modification Phosphotyrosine. Residue S263 is modified to Phosphoserine.

Belongs to the eukaryotic ribosomal protein eS1 family. As to quaternary structure, component of the small ribosomal subunit. Mature ribosomes consist of a small (40S) and a large (60S) subunit. The 40S subunit contains about 33 different proteins and 1 molecule of RNA (18S). The 60S subunit contains about 49 different proteins and 3 molecules of RNA (28S, 5.8S and 5S). Identified in a IGF2BP1-dependent mRNP granule complex containing untranslated mRNAs. Binds with high affinity to IPO4. Interacts with DDIT3. Part of the small subunit (SSU) processome, composed of more than 70 proteins and the RNA chaperone small nucleolar RNA (snoRNA) U3. Post-translationally, ADP-ribosylated at Tyr-155 by PARP1 in presence of HPF1.

The protein resides in the cytoplasm. It localises to the nucleus. The protein localises to the nucleolus. In terms of biological role, component of the small ribosomal subunit. The ribosome is a large ribonucleoprotein complex responsible for the synthesis of proteins in the cell. Part of the small subunit (SSU) processome, first precursor of the small eukaryotic ribosomal subunit. During the assembly of the SSU processome in the nucleolus, many ribosome biogenesis factors, an RNA chaperone and ribosomal proteins associate with the nascent pre-rRNA and work in concert to generate RNA folding, modifications, rearrangements and cleavage as well as targeted degradation of pre-ribosomal RNA by the RNA exosome. May play a role during erythropoiesis through regulation of transcription factor DDIT3. This Bos taurus (Bovine) protein is Small ribosomal subunit protein eS1.